We begin with the raw amino-acid sequence, 305 residues long: Deoxyribonuclease gamma (305 aa).

The N-terminal stretch at 1–20 (MSRELAPLLLLLLSIHSALA) is a signal peptide. A Bipartite nuclear localization signal motif is present at residues 35 to 51 (KQEDKNAMDVIVKVIKR). Residues Glu100 and His155 contribute to the active site. Cys194 and Cys231 are oxidised to a cystine. Positions 284-305 (SRAFTNSKKSVTLRKKTKSKRS) are not required for free DNA-nuclease activity but required for activity towards liposome-coated DNA. The short motif at 296 to 304 (LRKKTKSKR) is the Nuclear localization signal element.

The protein belongs to the DNase I family. Ca(2+) serves as cofactor. Mg(2+) is required as a cofactor. Poly-ADP-ribosylated by PARP1. ADP-ribosylation negatively regulates enzymatic activity during apoptosis. Liver and spleen.

Its subcellular location is the nucleus. It localises to the endoplasmic reticulum. It is found in the secreted. Its activity is regulated as follows. Inhibited by zinc. Has DNA hydrolytic activity. Is capable of both single- and double-stranded DNA cleavage, producing DNA fragments with 3'-OH ends. Can cleave chromatin to nucleosomal units and cleaves nucleosomal and liposome-coated DNA. Acts in internucleosomal DNA fragmentation (INDF) during apoptosis and necrosis. The role in apoptosis includes myogenic and neuronal differentiation, and BCR-mediated clonal deletion of self-reactive B cells. Is active on chromatin in apoptotic cell-derived membrane-coated microparticles and thus suppresses anti-DNA autoimmunity. Together with DNASE1, plays a key role in degrading neutrophil extracellular traps (NETs). NETs are mainly composed of DNA fibers and are released by neutrophils to bind pathogens during inflammation. Degradation of intravascular NETs by DNASE1 and DNASE1L3 is required to prevent formation of clots that obstruct blood vessels and cause organ damage following inflammation. The protein is Deoxyribonuclease gamma of Homo sapiens (Human).